A 190-amino-acid polypeptide reads, in one-letter code: Elongation factor P-like protein (190 aa).

It belongs to the elongation factor P family.

The chain is Elongation factor P-like protein from Serratia proteamaculans (strain 568).